The primary structure comprises 381 residues: Probable glucuronosyltransferase Os04g0103100 (381 aa).

Over 1–69 the chain is Cytoplasmic; sequence MASIRRPHSP…HTSFRRPLPR (69 aa). The interval 21-50 is disordered; that stretch reads HLGPFASSSPPSSPLRHSSSSSSPRSAAHH. Residues 26 to 46 show a composition bias toward low complexity; it reads ASSSPPSSPLRHSSSSSSPRS. The helical; Signal-anchor for type II membrane protein transmembrane segment at 70–90 threads the bilayer; the sequence is FAAFFLLGSFLGLLHFLSHLP. The Lumenal portion of the chain corresponds to 91–381; that stretch reads RPLGPIPNPN…TDLDVIIPLK (291 aa). The tract at residues 96–122 is disordered; sequence IPNPNSHHRHRDPFPILQHPHPPSTPH. 2 N-linked (GlcNAc...) asparagine glycosylation sites follow: Asn-194 and Asn-296.

The protein belongs to the glycosyltransferase 43 family.

It localises to the golgi apparatus membrane. In terms of biological role, involved in the synthesis of glucuronoxylan hemicellulose in secondary cell walls. The polypeptide is Probable glucuronosyltransferase Os04g0103100 (Oryza sativa subsp. japonica (Rice)).